Reading from the N-terminus, the 592-residue chain is MFGRTHYCGEVTDMAIGQTVRLKGWVQKRRDLGGLIFIDLRDRTGIVQIVFSPDVSKEALQVAETIRSEYVLDVEGTVVQREEGQVNPNLPTGTIEVHAMHVTILSEAKTPPFLISDKTDVSEDVRLKYRYLDLRRPVMFQTFKMRHQVTKAIRDFLDEEGFLEVETPILTKSTPEGARDYLVPSRVHPGEFYALPQSPQIFKQLLMVAGFERYYQIARCFRDEDLRADRQPEFTQVDIETSFMSQDDILAMIERMMARVMKVAKGVDISIPFPRMSYDEAIARYGSDKPDTRFGLELVDLSEQVKDCGFKVFASAVQNGGQVKAINVKGAADKYSRKDIDALTEYVARYGAKGLAWLKVEADGLKGPIAKFFTEDEQKQMMQTLEAETGDLLLFVADKKSVVADALGALRLKLGKDLQLIDESAFHFLWITDWPLFEYDEEEGRYYAAHHPFTMPVREDVPKFETDPASVRAQAYDLVLNGYELGGGSLRIFERDIQEKMFKTLGFTEEQAREQFGFLLEAFEYGTPPHGGIALGLDRLVMLLAGRSNLRDTIAFPKTASASCLLTEAPSAVSEEQLEELHLRIKDVQKVD.

An L-aspartate-binding site is contributed by Glu176. An aspartate region spans residues 200-203 (QIFK). Arg222 provides a ligand contact to L-aspartate. ATP-binding positions include 222–224 (RDE) and Gln231. An L-aspartate-binding site is contributed by His450. Glu484 provides a ligand contact to ATP. Arg491 contacts L-aspartate. 536-539 (GLDR) is an ATP binding site.

The protein belongs to the class-II aminoacyl-tRNA synthetase family. Type 1 subfamily. As to quaternary structure, homodimer.

The protein resides in the cytoplasm. It carries out the reaction tRNA(Asx) + L-aspartate + ATP = L-aspartyl-tRNA(Asx) + AMP + diphosphate. In terms of biological role, aspartyl-tRNA synthetase with relaxed tRNA specificity since it is able to aspartylate not only its cognate tRNA(Asp) but also tRNA(Asn). Reaction proceeds in two steps: L-aspartate is first activated by ATP to form Asp-AMP and then transferred to the acceptor end of tRNA(Asp/Asn). This Anoxybacillus flavithermus (strain DSM 21510 / WK1) protein is Aspartate--tRNA(Asp/Asn) ligase.